Here is a 453-residue protein sequence, read N- to C-terminus: Chromosomal replication initiator protein DnaA (453 aa).

The tract at residues 1–76 (MSGDAAALWP…LAWRQQLPAV (76 aa)) is domain I, interacts with DnaA modulators. Residues 76–115 (VRSVSVRGGVAATERAATLASVPLPTFDAPAAPAANPALL) are domain II. Positions 116–333 (GFDPRLSFDR…GALNKLLAYA (218 aa)) are domain III, AAA+ region. ATP-binding residues include Gly-160, Gly-162, Lys-163, and Thr-164. Residues 334 to 453 (ALTGARIDLM…IAAIRRSLNS (120 aa)) form a domain IV, binds dsDNA region.

It belongs to the DnaA family. As to quaternary structure, oligomerizes as a right-handed, spiral filament on DNA at oriC.

It localises to the cytoplasm. Plays an essential role in the initiation and regulation of chromosomal replication. ATP-DnaA binds to the origin of replication (oriC) to initiate formation of the DNA replication initiation complex once per cell cycle. Binds the DnaA box (a 9 base pair repeat at the origin) and separates the double-stranded (ds)DNA. Forms a right-handed helical filament on oriC DNA; dsDNA binds to the exterior of the filament while single-stranded (ss)DNA is stabiized in the filament's interior. The ATP-DnaA-oriC complex binds and stabilizes one strand of the AT-rich DNA unwinding element (DUE), permitting loading of DNA polymerase. After initiation quickly degrades to an ADP-DnaA complex that is not apt for DNA replication. Binds acidic phospholipids. This is Chromosomal replication initiator protein DnaA from Sphingopyxis alaskensis (strain DSM 13593 / LMG 18877 / RB2256) (Sphingomonas alaskensis).